Reading from the N-terminus, the 598-residue chain is MLKLVGGGGGQDWACSVAGTSLGGEEAAFEVARPGDQGKAGGGSPGWGCAGIPDSAPGAGVLQAGAVGPARGGQGAEEVGESAGGGEERRVRHPQAPALRLLNRKPQGGSGEIKTPENDLQRGRLSRGPRTAPPAPGMGDRSGQQERSVPHSPGAPVGTSAAAVNGLLHNGFHPPPVQPPHVCSRGPVGGSDAAPQRLPLLPELQPQPLLPQHDSPAKKCRLRRRMDSGRKNRPPFPWFGMDIGGTLVKLVYFEPKDITAEEEQEEVENLKSIRKYLTSNTAYGKTGIRDVHLELKNLTMCGRKGNLHFIRFPSCAMHRFIQMGSEKNFSSLHTTLCATGGGAFKFEEDFRMIADLQLHKLDELDCLIQGLLYVDSVGFNGKPECYYFENPTNPELCQKKPYCLDNPYPMLLVNMGSGVSILAVYSKDNYKRVTGTSLGGGTFLGLCCLLTGCETFEEALEMAAKGDSTNVDKLVKDIYGGDYERFGLQGSAVASSFGNMMSKEKRDSISKEDLARATLVTITNNIGSIARMCALNENIDRVVFVGNFLRINMVSMKLLAYAMDFWSKGQLKALFLEHEGYFGAVGALLELFKMTDDK.

The disordered stretch occupies residues 32–161 (ARPGDQGKAG…SPGAPVGTSA (130 aa)). Positions 38-49 (GKAGGGSPGWGC) are enriched in gly residues. Ser-215 is subject to Phosphoserine. The Nucleolar localization signal signature appears at 218-235 (KKCRLRRRMDSGRKNRPP). Glu-363 functions as the Proton acceptor in the catalytic mechanism. Residues Ser-417, Ser-420, and Arg-432 each contribute to the acetyl-CoA site.

This sequence belongs to the type II pantothenate kinase family. As to quaternary structure, homodimer. As to expression, expressed at high levels in brain, heart, kidney, liver, skeletal muscle and testis. Detected at much lower levels in kidney, liver, brain and testis and not detected in heart or skeletal muscle.

It is found in the cytoplasm. Its subcellular location is the nucleus. The protein resides in the nucleolus. The protein localises to the cytosol. It localises to the cytoplasmic vesicle. It is found in the clathrin-coated vesicle. Its subcellular location is the recycling endosome. The enzyme catalyses (R)-pantothenate + ATP = (R)-4'-phosphopantothenate + ADP + H(+). The protein operates within cofactor biosynthesis; coenzyme A biosynthesis; CoA from (R)-pantothenate: step 1/5. Its activity is regulated as follows. Regulated by feedback inhibition by CoA and its thioesters. In terms of biological role, catalyzes the phosphorylation of pantothenate to generate 4'-phosphopantothenate in the first and rate-determining step of coenzyme A (CoA) synthesis. The sequence is that of Pantothenate kinase 1 (PANK1) from Homo sapiens (Human).